Consider the following 235-residue polypeptide: Phosphoribosylaminoimidazole-succinocarboxamide synthase (235 aa).

The protein belongs to the SAICAR synthetase family.

It catalyses the reaction 5-amino-1-(5-phospho-D-ribosyl)imidazole-4-carboxylate + L-aspartate + ATP = (2S)-2-[5-amino-1-(5-phospho-beta-D-ribosyl)imidazole-4-carboxamido]succinate + ADP + phosphate + 2 H(+). It participates in purine metabolism; IMP biosynthesis via de novo pathway; 5-amino-1-(5-phospho-D-ribosyl)imidazole-4-carboxamide from 5-amino-1-(5-phospho-D-ribosyl)imidazole-4-carboxylate: step 1/2. This Chlorobium chlorochromatii (strain CaD3) protein is Phosphoribosylaminoimidazole-succinocarboxamide synthase.